Consider the following 271-residue polypeptide: Aliphatic sulfonates import ATP-binding protein SsuB (271 aa).

The 222-residue stretch at 13-234 folds into the ABC transporter domain; the sequence is ITLESIGKRY…RKGSAKLAAL (222 aa). 45–52 is a binding site for ATP; sequence GRSGCGKS. The interval 250-271 is disordered; it reads EASRQGIKASRQGTATSRRVAN. Polar residues predominate over residues 260-271; sequence RQGTATSRRVAN.

This sequence belongs to the ABC transporter superfamily. Aliphatic sulfonates importer (TC 3.A.1.17.2) family. In terms of assembly, the complex is composed of two ATP-binding proteins (SsuB), two transmembrane proteins (SsuC) and a solute-binding protein (SsuA).

The protein resides in the cell inner membrane. It catalyses the reaction ATP + H2O + aliphatic sulfonate-[sulfonate-binding protein]Side 1 = ADP + phosphate + aliphatic sulfonateSide 2 + [sulfonate-binding protein]Side 1.. Functionally, part of the ABC transporter complex SsuABC involved in aliphatic sulfonates import. Responsible for energy coupling to the transport system. The protein is Aliphatic sulfonates import ATP-binding protein SsuB of Yersinia pestis bv. Antiqua (strain Antiqua).